Reading from the N-terminus, the 277-residue chain is Probable enoyl-CoA hydratase, mitochondrial (277 aa).

Residues 1–42 (MLKQVIKTVSSSQAPKKYFFKQFCTSTTEKKGRVGLVTLNRP) constitute a mitochondrion transit peptide. Substrate is bound by residues 85-88 (ADIK) and G128.

The protein belongs to the enoyl-CoA hydratase/isomerase family. In terms of assembly, homohexamer; dimer of trimers.

It is found in the mitochondrion matrix. It carries out the reaction a (3S)-3-hydroxyacyl-CoA = a (2E)-enoyl-CoA + H2O. The enzyme catalyses a 4-saturated-(3S)-3-hydroxyacyl-CoA = a (3E)-enoyl-CoA + H2O. The catalysed reaction is (3S)-3-hydroxybutanoyl-CoA = (2E)-butenoyl-CoA + H2O. It catalyses the reaction 3-hydroxyisovaleryl-CoA = 3-methylbut-2-enoyl-CoA + H2O. It carries out the reaction 3-hydroxypropanoyl-CoA = acryloyl-CoA + H2O. The enzyme catalyses 3-hydroxybutanoyl-CoA = (2E)-butenoyl-CoA + H2O. It participates in lipid metabolism; fatty acid beta-oxidation. Functionally, straight-chain enoyl-CoA thioesters from C4 up to at least C16 are processed, although with decreasing catalytic rate. This Dictyostelium discoideum (Social amoeba) protein is Probable enoyl-CoA hydratase, mitochondrial (echs1).